The sequence spans 500 residues: Glucose-1-phosphate adenylyltransferase large subunit, chloroplastic/amyloplastic (500 aa).

The transit peptide at 1-33 (RASPPSESRAPLRAPQRSATRQHQARQGPRRMC) directs the protein to the chloroplast. Residues 1–47 (RASPPSESRAPLRAPQRSATRQHQARQGPRRMCNGGRGPPYWTAGVT) form a disordered region.

Belongs to the bacterial/plant glucose-1-phosphate adenylyltransferase family. As to quaternary structure, heterotetramer.

Its subcellular location is the plastid. It is found in the chloroplast. It localises to the amyloplast. The catalysed reaction is alpha-D-glucose 1-phosphate + ATP + H(+) = ADP-alpha-D-glucose + diphosphate. Its pathway is glycan biosynthesis; starch biosynthesis. With respect to regulation, insensitive to 3'phosphoglycerate and orthophosphate. Functionally, this protein plays a role in synthesis of starch. It catalyzes the synthesis of the activated glycosyl donor, ADP-glucose from Glc-1-P and ATP. This is Glucose-1-phosphate adenylyltransferase large subunit, chloroplastic/amyloplastic (AGA.7) from Triticum aestivum (Wheat).